A 661-amino-acid polypeptide reads, in one-letter code: Zeaxanthin epoxidase, chloroplastic (661 aa).

A chloroplast-targeting transit peptide spans 1–59; that stretch reads MLLFRATLLPSPPFFHKTYFSHLSPVIFSDDPLPVSLQRNRVSGCRKQKWRQIRTLALQ. FAD-binding positions include 81–109 and 359–372; these read RILIAGGGIGGLVLALAAKKKGFDALVFE and IFTWGKGRVTLLGD. The FHA domain maps to 555–609; sequence HIIGSISHDDSEGISIHLPFPQVHKTHARIACKDNIFYLTDLQSQYGTWITDNEG.

It depends on FAD as a cofactor. As to expression, expressed in flower buds, lips and leaves. Detected in roots.

The protein localises to the plastid. It is found in the chloroplast. It catalyses the reaction all-trans-zeaxanthin + 4 reduced [2Fe-2S]-[ferredoxin] + 2 O2 + 4 H(+) = all-trans-violaxanthin + 4 oxidized [2Fe-2S]-[ferredoxin] + 2 H2O. It participates in plant hormone biosynthesis; abscisate biosynthesis. Functionally, zeaxanthin epoxidase that plays an important role in the xanthophyll cycle and abscisic acid (ABA) biosynthesis. Converts zeaxanthin into antheraxanthin and subsequently violaxanthin. The protein is Zeaxanthin epoxidase, chloroplastic (ZEP) of Oncidium hybrid cultivar (Orchid).